A 344-amino-acid polypeptide reads, in one-letter code: Ribosomal RNA large subunit methyltransferase Cfr (344 aa).

The Proton acceptor role is filled by Glu90. Residues 97–330 (KQGWESFCIS…ATVRTQFGSE (234 aa)) enclose the Radical SAM core domain. Residues Cys104 and Cys335 are joined by a disulfide bond. Positions 111, 115, and 118 each coordinate [4Fe-4S] cluster. S-adenosyl-L-methionine contacts are provided by residues 157–158 (GE), Ser188, 211–213 (SLH), and Asn292. Cys335 serves as the catalytic S-methylcysteine intermediate.

Belongs to the radical SAM superfamily. RlmN family. Cfr subfamily. [4Fe-4S] cluster is required as a cofactor.

Its subcellular location is the cytoplasm. It catalyses the reaction adenosine(2503) in 23S rRNA + 2 reduced [2Fe-2S]-[ferredoxin] + 2 S-adenosyl-L-methionine = 8-methyladenosine(2503) in 23S rRNA + 5'-deoxyadenosine + L-methionine + 2 oxidized [2Fe-2S]-[ferredoxin] + S-adenosyl-L-homocysteine. In terms of biological role, specifically methylates position 8 of adenine 2503 in 23S rRNA. Confers resistance to some classes of antibiotics. The polypeptide is Ribosomal RNA large subunit methyltransferase Cfr (Clostridium botulinum (strain Langeland / NCTC 10281 / Type F)).